We begin with the raw amino-acid sequence, 343 residues long: MFGGAKGGHFGVPPAGCSGAVSQAAAGTKAGPAGGRPADTMWRLRCKAKGGTHVLQGLSNRTRLRELQGQIAAITGIAPGSQRILVGYPPECLDLSDRDITLGDLPIQSGDMLIVEEDQTRPKASPAFSKHGAPSYVRETLPVLTRTAVPADNSCLFTSVYYVVEGGVLNPACAPEMRRLIAQIVASDPDLYSEAILGKTNEEYCDWIRRDDTWGGAIEISILSKFYQCEICVVDTQTVRIDRFGEDAGYTKRVLLIYDGIHYDPLQRNFPDPDTPPLTIFSSNDDIVLVQALELADEARRKRQFTDVNRFTLRCMLCQKGLTGQAEARDHARETGHTNFGEV.

Residues 45–123 (RCKAKGGTHV…IVEEDQTRPK (79 aa)) are UBX-like. The region spanning 144–269 (LTRTAVPADN…GIHYDPLQRN (126 aa)) is the OTU domain. Positions 149–155 (VPADNSC) are cys-loop. Asp-152 is an active-site residue. Cys-155 functions as the Nucleophile in the catalytic mechanism. Residues 208–218 (IRRDDTWGGAI) form a variable-loop region. The tract at residues 258-262 (YDGIH) is his-loop. Ile-261 provides a ligand contact to substrate. The active site involves His-262. Positions 286-291 (DIVLVQ) are S2 site. The segment at 313-337 (LRCMLCQKGLTGQAEARDHARETGH) adopts a C2H2-type zinc-finger fold. The active site involves His-337.

In terms of assembly, interacts with VCP; the interaction is direct. Interacts with FAF2/UBXD8. Interacts with DERL1; however interaction is dependent on the UBAX-like region, suggesting that it may be indirect. Interacts with PLAA, UBXN6 and VCP; may form a complex involved in macroautophagy.

It localises to the cytoplasm. The catalysed reaction is Thiol-dependent hydrolysis of ester, thioester, amide, peptide and isopeptide bonds formed by the C-terminal Gly of ubiquitin (a 76-residue protein attached to proteins as an intracellular targeting signal).. In terms of biological role, hydrolase that can remove conjugated ubiquitin from proteins and participates in endoplasmic reticulum-associated degradation (ERAD) for misfolded lumenal proteins. May act by triming the ubiquitin chain on the associated substrate to facilitate their threading through the VCP/p97 pore. Ubiquitin moieties on substrates may present a steric impediment to the threading process when the substrate is transferred to the VCP pore and threaded through VCP's axial channel. Mediates deubiquitination of 'Lys-27'-, 'Lys-29'- and 'Lys-33'-linked polyubiquitin chains. Also able to hydrolyze 'Lys-11'-linked ubiquitin chains. Cleaves both polyubiquitin and di-ubiquitin. May play a role in macroautophagy, regulating for instance the clearance of damaged lysosomes. May recruit PLAA, UBXN6 and VCP to damaged lysosome membranes decorated with K48-linked ubiquitin chains and remove these chains allowing autophagosome formation. This chain is Ubiquitin thioesterase OTU1 (Yod1), found in Rattus norvegicus (Rat).